A 209-amino-acid chain; its full sequence is Uracil phosphoribosyltransferase (209 aa).

5-phospho-alpha-D-ribose 1-diphosphate is bound by residues arginine 79, arginine 104, and 131–139 (DPMLATGGS). Residues isoleucine 194 and 199–201 (GDA) each bind uracil. Aspartate 200 is a binding site for 5-phospho-alpha-D-ribose 1-diphosphate.

The protein belongs to the UPRTase family. Mg(2+) is required as a cofactor.

The enzyme catalyses UMP + diphosphate = 5-phospho-alpha-D-ribose 1-diphosphate + uracil. The protein operates within pyrimidine metabolism; UMP biosynthesis via salvage pathway; UMP from uracil: step 1/1. Its activity is regulated as follows. Allosterically activated by GTP. In terms of biological role, catalyzes the conversion of uracil and 5-phospho-alpha-D-ribose 1-diphosphate (PRPP) to UMP and diphosphate. This Clostridium acetobutylicum (strain ATCC 824 / DSM 792 / JCM 1419 / IAM 19013 / LMG 5710 / NBRC 13948 / NRRL B-527 / VKM B-1787 / 2291 / W) protein is Uracil phosphoribosyltransferase.